Here is a 113-residue protein sequence, read N- to C-terminus: Putative single-stranded DNA-binding protein ycf41 (113 aa).

Positions 1–101 (MNYASFIIKI…EVSGFKIYPF (101 aa)) constitute an SSB domain.

The protein resides in the plastid. It is found in the chloroplast. In Trieres chinensis (Marine centric diatom), this protein is Putative single-stranded DNA-binding protein ycf41 (ycf41).